The sequence spans 292 residues: MKDYLVKQVSEDGQLRAYAVNATQVVTEAQEKHDTWPTSSAAFGRTIVGTLLLSAAGLKGDTKMTVKVDGDGPVGKIVVDGNAQGTVKGYVTNPHVNLPSNEKNKIDVKAGVGTTGTLSVTKDLGLKEPFTGQVPLVSGELGEDFTYYLAKSEQTPSAVGVSVFVNEDSTIGVAGGFMIQILPGADDRLIDVLEARLQEMPLVSELLQQGMTPEGIITEIVGELPMKTLEELPVKYECDCSKERFAKALSSIAPQDLKQLIEEDHGAEATCRFCGKQYQFSEADLKAILAEQ.

2 cysteine pairs are disulfide-bonded: C238–C240 and C271–C274.

It belongs to the HSP33 family. Post-translationally, under oxidizing conditions two disulfide bonds are formed involving the reactive cysteines. Under reducing conditions zinc is bound to the reactive cysteines and the protein is inactive.

The protein resides in the cytoplasm. Functionally, redox regulated molecular chaperone. Protects both thermally unfolding and oxidatively damaged proteins from irreversible aggregation. Plays an important role in the bacterial defense system toward oxidative stress. The sequence is that of 33 kDa chaperonin from Latilactobacillus sakei subsp. sakei (strain 23K) (Lactobacillus sakei subsp. sakei).